Consider the following 244-residue polypeptide: Large ribosomal subunit protein uL30 (244 aa).

Belongs to the universal ribosomal protein uL30 family.

The chain is Large ribosomal subunit protein uL30 (RPL7) from Candida glabrata (strain ATCC 2001 / BCRC 20586 / JCM 3761 / NBRC 0622 / NRRL Y-65 / CBS 138) (Yeast).